We begin with the raw amino-acid sequence, 378 residues long: MIRGNDPILLTPGPLTTSLATKQAMLRDWGSWDAAFNAITGSLCEDLVRIVHGEGTHVCVPMQGSGTFSVEAAIANVVPRDGKVLVPQNGAYCQRILKICKVLGRAHVELPIPEDRPATAAAIEAALKKDPSITHVAQVHCETGAGVLNPLPEIAAVCARLGKGLIVDAMSSFGAIEIDARTMPFDALVAATGKCIEGVPGMGFVLVKKTVLEGSQGNSHSLALDLYDQYTYMQKTTQWRFTPPTHVVAAFRTALDQFLEEGGQPVRGERYRRNYETLVQGMAVLGFRPFLSPDVQAPIIVTFHAPADARYDFRTFYEKVRSRGYILYPGKLTQVETFRVGCIGAIDDNEMRNVVSAIGETLREMGISMQPEGRVRAA.

Lys194 bears the N6-(pyridoxal phosphate)lysine mark.

The protein belongs to the class-V pyridoxal-phosphate-dependent aminotransferase family. PhnW subfamily. Homodimer. Pyridoxal 5'-phosphate is required as a cofactor.

It carries out the reaction (2-aminoethyl)phosphonate + pyruvate = phosphonoacetaldehyde + L-alanine. Functionally, involved in phosphonate degradation. This is 2-aminoethylphosphonate--pyruvate transaminase 1 from Cupriavidus pinatubonensis (strain JMP 134 / LMG 1197) (Cupriavidus necator (strain JMP 134)).